The sequence spans 569 residues: Glutamate--tRNA ligase, chloroplastic/mitochondrial (569 aa).

59–61 (RFA) contacts L-glutamate. The 'HIGH' region signature appears at 62-72 (PSPTGNLHVGG). Residue His69 coordinates ATP. L-glutamate is bound by residues Glu95, 247–251 (YNFCV), and Arg265. ATP is bound by residues Glu268 and 303–307 (KLSKR). Positions 303–307 (KLSKR) match the 'KMSKS' region motif.

The protein belongs to the class-I aminoacyl-tRNA synthetase family. Glutamate--tRNA ligase type 1 subfamily.

It is found in the plastid. The protein resides in the chloroplast. Its subcellular location is the mitochondrion. The enzyme catalyses tRNA(Glu) + L-glutamate + ATP = L-glutamyl-tRNA(Glu) + AMP + diphosphate. In terms of biological role, catalyzes the attachment of glutamate to tRNA(Glu) in a two-step reaction: glutamate is first activated by ATP to form Glu-AMP and then transferred to the acceptor end of tRNA(Glu). This is Glutamate--tRNA ligase, chloroplastic/mitochondrial from Nicotiana tabacum (Common tobacco).